The chain runs to 209 residues: Ribonuclease HII (209 aa).

One can recognise an RNase H type-2 domain in the interval 19–209 (CIIVGVDEVG…LPGITKLYSK (191 aa)). Residues aspartate 25, glutamate 26, and aspartate 118 each contribute to the a divalent metal cation site.

This sequence belongs to the RNase HII family. The cofactor is Mn(2+). Requires Mg(2+) as cofactor.

Its subcellular location is the cytoplasm. The enzyme catalyses Endonucleolytic cleavage to 5'-phosphomonoester.. Endonuclease that specifically degrades the RNA of RNA-DNA hybrids. This is Ribonuclease HII from Ehrlichia canis (strain Jake).